The sequence spans 242 residues: uncharacterized protein (242 aa).

An S4 RNA-binding domain is found at 2 to 62 (EKAYKLLSVQ…VEKPSVIFED (61 aa)). Asp-93 is an active-site residue.

The protein belongs to the pseudouridine synthase RluA family.

It carries out the reaction a uridine in RNA = a pseudouridine in RNA. This is an uncharacterized protein from Helicobacter pylori (strain J99 / ATCC 700824) (Campylobacter pylori J99).